The primary structure comprises 476 residues: Cysteine--tRNA ligase (476 aa).

Residue Cys-36 participates in Zn(2+) binding. The short motif at 38 to 48 is the 'HIGH' region element; the sequence is PTVYDYAHIGN. The Zn(2+) site is built by Cys-221, His-246, and Glu-250. The 'KMSKS' region motif lies at 278-282; the sequence is KMSKS. An ATP-binding site is contributed by Lys-281.

This sequence belongs to the class-I aminoacyl-tRNA synthetase family. In terms of assembly, monomer. Zn(2+) serves as cofactor.

It is found in the cytoplasm. It carries out the reaction tRNA(Cys) + L-cysteine + ATP = L-cysteinyl-tRNA(Cys) + AMP + diphosphate. The protein is Cysteine--tRNA ligase of Chlamydia caviae (strain ATCC VR-813 / DSM 19441 / 03DC25 / GPIC) (Chlamydophila caviae).